The primary structure comprises 557 residues: T-complex protein 1 subunit theta-like 2 (557 aa).

2 disordered regions span residues 1–33 and 531–557; these read MDST…EPHL and EIWN…GLNN.

It belongs to the TCP-1 chaperonin family.

Its subcellular location is the cytoplasm. Possible molecular chaperone; assists the folding of proteins upon ATP hydrolysis. This Homo sapiens (Human) protein is T-complex protein 1 subunit theta-like 2 (CCT8L2).